Consider the following 816-residue polypeptide: Subtilisin-like protease SBT2.6 (816 aa).

Residues 1–19 form the signal peptide; it reads MDIGCKVLVFFTCFLTVTA. A propeptide spans 20 to 126 (activation peptide); sequence EIYIVTMEGE…VDRDWKVRKL (107 aa). Residues 22–124 enclose the Inhibitor I9 domain; that stretch reads YIVTMEGEPI…KSVDRDWKVR (103 aa). Residues 120-672 form the Peptidase S8 domain; it reads DWKVRKLTTH…SGHVNPSAAL (553 aa). Active-site charge relay system residues include aspartate 160 and histidine 235. The PA domain occupies 418–492; the sequence is DCQKPEVLNK…SCIPGILITD (75 aa). Residues asparagine 504 and asparagine 578 are each glycosylated (N-linked (GlcNAc...) asparagine). The Charge relay system role is filled by serine 597. Asparagine 702 carries N-linked (GlcNAc...) asparagine glycosylation.

The protein belongs to the peptidase S8 family.

It localises to the secreted. This Arabidopsis thaliana (Mouse-ear cress) protein is Subtilisin-like protease SBT2.6.